A 500-amino-acid chain; its full sequence is NAD(P)H-quinone oxidoreductase chain 4, chloroplastic (500 aa).

14 consecutive transmembrane segments (helical) span residues 4–24, 37–57, 84–104, 111–129, 134–154, 167–187, 208–228, 242–262, 272–292, 305–325, 330–350, 386–406, 416–436, and 462–482; these read FPWL…ILFL, LCIC…HFQL, GISI…TLAA, SRVF…IGPF, LLLF…LLSM, FILY…GICL, ALEM…SPII, HYST…YGLV, AHSI…IYAA, IAYS…SIND, GAIL…FLAG, LALP…GILT, ILIT…SLSM, and FFVS…PDFV.

Belongs to the complex I subunit 4 family.

The protein resides in the plastid. Its subcellular location is the chloroplast thylakoid membrane. It carries out the reaction a plastoquinone + NADH + (n+1) H(+)(in) = a plastoquinol + NAD(+) + n H(+)(out). The enzyme catalyses a plastoquinone + NADPH + (n+1) H(+)(in) = a plastoquinol + NADP(+) + n H(+)(out). The protein is NAD(P)H-quinone oxidoreductase chain 4, chloroplastic of Morus indica (Mulberry).